A 247-amino-acid chain; its full sequence is tRNA (guanine-N(1)-)-methyltransferase (247 aa).

Gly-126 lines the S-adenosyl-L-methionine pocket.

The protein belongs to the RNA methyltransferase TrmD family. In terms of assembly, homodimer.

The protein localises to the cytoplasm. The catalysed reaction is guanosine(37) in tRNA + S-adenosyl-L-methionine = N(1)-methylguanosine(37) in tRNA + S-adenosyl-L-homocysteine + H(+). In terms of biological role, specifically methylates guanosine-37 in various tRNAs. The polypeptide is tRNA (guanine-N(1)-)-methyltransferase (Jannaschia sp. (strain CCS1)).